We begin with the raw amino-acid sequence, 219 residues long: Thiamine-phosphate synthase (219 aa).

4-amino-2-methyl-5-(diphosphooxymethyl)pyrimidine contacts are provided by residues 44 to 48 and N79; that span reads QFREK. D80 and D99 together coordinate Mg(2+). S117 contributes to the 4-amino-2-methyl-5-(diphosphooxymethyl)pyrimidine binding site. 143–145 contributes to the 2-[(2R,5Z)-2-carboxy-4-methylthiazol-5(2H)-ylidene]ethyl phosphate binding site; that stretch reads TST. Residue K146 coordinates 4-amino-2-methyl-5-(diphosphooxymethyl)pyrimidine. 2-[(2R,5Z)-2-carboxy-4-methylthiazol-5(2H)-ylidene]ethyl phosphate is bound by residues G175 and 195–196; that span reads IS.

It belongs to the thiamine-phosphate synthase family. Requires Mg(2+) as cofactor.

The enzyme catalyses 2-[(2R,5Z)-2-carboxy-4-methylthiazol-5(2H)-ylidene]ethyl phosphate + 4-amino-2-methyl-5-(diphosphooxymethyl)pyrimidine + 2 H(+) = thiamine phosphate + CO2 + diphosphate. It catalyses the reaction 2-(2-carboxy-4-methylthiazol-5-yl)ethyl phosphate + 4-amino-2-methyl-5-(diphosphooxymethyl)pyrimidine + 2 H(+) = thiamine phosphate + CO2 + diphosphate. The catalysed reaction is 4-methyl-5-(2-phosphooxyethyl)-thiazole + 4-amino-2-methyl-5-(diphosphooxymethyl)pyrimidine + H(+) = thiamine phosphate + diphosphate. It participates in cofactor biosynthesis; thiamine diphosphate biosynthesis; thiamine phosphate from 4-amino-2-methyl-5-diphosphomethylpyrimidine and 4-methyl-5-(2-phosphoethyl)-thiazole: step 1/1. Its function is as follows. Condenses 4-methyl-5-(beta-hydroxyethyl)thiazole monophosphate (THZ-P) and 2-methyl-4-amino-5-hydroxymethyl pyrimidine pyrophosphate (HMP-PP) to form thiamine monophosphate (TMP). The chain is Thiamine-phosphate synthase from Bacillus cereus (strain AH820).